The following is a 101-amino-acid chain: DNA-binding protein Fis (101 aa).

The segment at residues 77–96 (QTRAANMLGINRGTLRKKLK) is a DNA-binding region (H-T-H motif).

It belongs to the transcriptional regulatory Fis family. As to quaternary structure, homodimer.

In terms of biological role, activates ribosomal RNA transcription. Plays a direct role in upstream activation of rRNA promoters. The protein is DNA-binding protein Fis of Shewanella baltica (strain OS223).